The sequence spans 287 residues: uncharacterized protein (287 aa).

A signal peptide spans 1–20; the sequence is MKVICGSVFLFSLFFQVVLG. The Extracellular portion of the chain corresponds to 22-201; it reads YFSSSSGNPN…AFYGPRRNIK (180 aa). N-linked (GlcNAc...) asparagine glycans are attached at residues N120, N154, and N166. A helical membrane pass occupies residues 202 to 222; that stretch reads AAIAVPSVILGLILVALVYYA. Over 223-287 the chain is Cytoplasmic; sequence YRKDTWKIYM…YYQSQVKKFH (65 aa).

The protein resides in the membrane. This is an uncharacterized protein from Schizosaccharomyces pombe (strain 972 / ATCC 24843) (Fission yeast).